Here is a 322-residue protein sequence, read N- to C-terminus: MSSNLIKSFGLIAIGAISGVTFTHFYYKGYQGSDVPDLTPRYTKFDSAGRALESIYDFNATKFFQYGIPGPVADQRVNHGYMSVFDRRTRNPFYTAETITQESLNQRKGNRRYSEFVPDDNIPEMFQAKLGDYRGSGYDRGHQVPAADCKFSQEAMNETFYLSNMCPQVGDGFNRNYWAYFEDWCRRLTSKYGSVTIMTGPLYLPKKNERGQWEVQYRVIGNPPNVAVPTHFFKVIIAEKSGEPTSSPSVAAFVLPNKPIADNFPLKNFAVPVEVVERASGLEILSNVPKGNRKQLCSEVVCQLNVKEFVESVKQKQKNQGK.

The Proton acceptor role is filled by His142. Asn174 serves as a coordination point for Mg(2+).

The protein belongs to the DNA/RNA non-specific endonuclease family. Homodimer. Mn(2+) is required as a cofactor. The cofactor is Mg(2+).

The protein resides in the mitochondrion inner membrane. In terms of biological role, this enzyme has both RNase and DNase activity. It degrades single-stranded DNA and RNA. This is Nuclease 1, mitochondrial (pnu1) from Schizosaccharomyces pombe (strain 972 / ATCC 24843) (Fission yeast).